We begin with the raw amino-acid sequence, 92 residues long: Small ribosomal subunit protein bS20 (92 aa).

Positions 1–11 (MANIKSQKKRI) are enriched in basic residues. A disordered region spans residues 1–22 (MANIKSQKKRIRQNEKARLRNK).

Belongs to the bacterial ribosomal protein bS20 family.

Its function is as follows. Binds directly to 16S ribosomal RNA. This Thermobifida fusca (strain YX) protein is Small ribosomal subunit protein bS20.